A 631-amino-acid polypeptide reads, in one-letter code: 2-isopropylmalate synthase 2, chloroplastic (631 aa).

Residues 1 to 46 (MESSILKSPNLSSPSFGVPSIPALSSSSTSPFSSLHLRSQNHRTIS) constitute a chloroplast transit peptide. The Pyruvate carboxyltransferase domain occupies 87-360 (VRIFDTTLRD…FTGIDTRHIV (274 aa)). Residues Asp96, His293, and Asn329 each contribute to the a divalent metal cation site.

This sequence belongs to the alpha-IPM synthase/homocitrate synthase family. LeuA type 1 subfamily. As to quaternary structure, homotetramer. It depends on Mg(2+) as a cofactor. Mn(2+) serves as cofactor. As to expression, expressed in roots, stems, leaves, flowers and siliques.

The protein localises to the plastid. It is found in the chloroplast. It catalyses the reaction 3-methyl-2-oxobutanoate + acetyl-CoA + H2O = (2S)-2-isopropylmalate + CoA + H(+). The protein operates within amino-acid biosynthesis; L-leucine biosynthesis; L-leucine from 3-methyl-2-oxobutanoate: step 1/4. Its activity is regulated as follows. Feedback inhibition by Leu. Its function is as follows. Catalyzes the condensation of the acetyl group of acetyl-CoA with 3-methyl-2-oxobutanoate (2-oxoisovalerate) to form 3-carboxy-3-hydroxy-4-methylpentanoate (2-isopropylmalate). Involved in Leu biosynthesis, but does not participate in the chain elongation of glucosinolates. The protein is 2-isopropylmalate synthase 2, chloroplastic of Arabidopsis thaliana (Mouse-ear cress).